The chain runs to 276 residues: NH(3)-dependent NAD(+) synthetase (276 aa).

43 to 50 (GISGGVDS) lines the ATP pocket. D49 is a Mg(2+) binding site. Position 146 (R146) interacts with deamido-NAD(+). T166 contributes to the ATP binding site. Residue E171 participates in Mg(2+) binding. The deamido-NAD(+) site is built by K179 and D186. Residues K195 and T217 each contribute to the ATP site. 266 to 267 (HK) serves as a coordination point for deamido-NAD(+).

It belongs to the NAD synthetase family. As to quaternary structure, homodimer.

The enzyme catalyses deamido-NAD(+) + NH4(+) + ATP = AMP + diphosphate + NAD(+) + H(+). The protein operates within cofactor biosynthesis; NAD(+) biosynthesis; NAD(+) from deamido-NAD(+) (ammonia route): step 1/1. Catalyzes the ATP-dependent amidation of deamido-NAD to form NAD. Uses ammonia as a nitrogen source. This chain is NH(3)-dependent NAD(+) synthetase, found in Psychromonas ingrahamii (strain DSM 17664 / CCUG 51855 / 37).